The sequence spans 268 residues: Phosphatidylglycerol--prolipoprotein diacylglyceryl transferase (268 aa).

4 helical membrane-spanning segments follow: residues 23 to 43 (WYALAYLAGFVLGWRYCLALA), 58 to 78 (FLTWAVVGVILGGRIGYVLFY), 96 to 116 (GGMSFHGGLIGVLGAILLFCW), and 119 to 139 (GLSPLAFGDLIAAAAPIGLFF). Arg141 contributes to the a 1,2-diacyl-sn-glycero-3-phospho-(1'-sn-glycerol) binding site. Helical transmembrane passes span 181–201 (SFLEGAVLFVLLAILVRMPAV), 206–226 (GMTAGIFFIGYGLSRIIAEFF), and 238–258 (AGATMGQLLSVPMVLFGVWLV).

This sequence belongs to the Lgt family.

It is found in the cell inner membrane. The enzyme catalyses L-cysteinyl-[prolipoprotein] + a 1,2-diacyl-sn-glycero-3-phospho-(1'-sn-glycerol) = an S-1,2-diacyl-sn-glyceryl-L-cysteinyl-[prolipoprotein] + sn-glycerol 1-phosphate + H(+). The protein operates within protein modification; lipoprotein biosynthesis (diacylglyceryl transfer). Catalyzes the transfer of the diacylglyceryl group from phosphatidylglycerol to the sulfhydryl group of the N-terminal cysteine of a prolipoprotein, the first step in the formation of mature lipoproteins. This chain is Phosphatidylglycerol--prolipoprotein diacylglyceryl transferase, found in Azospirillum brasilense.